Consider the following 249-residue polypeptide: 14-3-3-like protein D (249 aa).

This sequence belongs to the 14-3-3 family.

The protein is 14-3-3-like protein D of Nicotiana tabacum (Common tobacco).